Reading from the N-terminus, the 604-residue chain is Glutamine--fructose-6-phosphate aminotransferase [isomerizing] (604 aa).

The active-site Nucleophile; for GATase activity is Cys2. One can recognise a Glutamine amidotransferase type-2 domain in the interval 2–218; sequence CGIVGVVGNR…DKELVILTKD (217 aa). 2 SIS domains span residues 284–423 and 456–594; these read IITS…ANGK and VQAL…VDKP. Residue Lys599 is the For Fru-6P isomerization activity of the active site.

Homodimer.

The protein resides in the cytoplasm. It carries out the reaction D-fructose 6-phosphate + L-glutamine = D-glucosamine 6-phosphate + L-glutamate. Catalyzes the first step in hexosamine metabolism, converting fructose-6P into glucosamine-6P using glutamine as a nitrogen source. This chain is Glutamine--fructose-6-phosphate aminotransferase [isomerizing], found in Streptococcus pyogenes serotype M18 (strain MGAS8232).